The sequence spans 145 residues: Hemoglobin subunit beta (145 aa).

The 145-residue stretch at 1 to 145 (MLTAEEKAAV…VANALAHRYH (145 aa)) folds into the Globin domain. Phosphothreonine is present on Thr11. Ser43 carries the post-translational modification Phosphoserine. Residue Lys58 is modified to N6-acetyllysine. Residue His62 coordinates heme b. Lys81 carries the post-translational modification N6-acetyllysine. His91 serves as a coordination point for heme b. The residue at position 92 (Cys92) is an S-nitrosocysteine.

The protein belongs to the globin family. Heterotetramer of two alpha chains and two beta chains. As to expression, red blood cells.

In terms of biological role, involved in oxygen transport from the lung to the various peripheral tissues. In Tragelaphus strepsiceros (Greater kudu), this protein is Hemoglobin subunit beta (HBB).